The sequence spans 461 residues: tRNA modification GTPase MnmE (461 aa).

(6S)-5-formyl-5,6,7,8-tetrahydrofolate is bound by residues R20, E85, and K124. Residues 221-383 (GIPVAIIGET…LQQLLTEVSS (163 aa)) form the TrmE-type G domain. A K(+)-binding site is contributed by N231. GTP contacts are provided by residues 231–236 (NAGKST), 250–256 (SDIHGTT), and 275–278 (DTAG). Position 235 (S235) interacts with Mg(2+). The K(+) site is built by S250, I252, and T255. Position 256 (T256) interacts with Mg(2+). K461 is a (6S)-5-formyl-5,6,7,8-tetrahydrofolate binding site.

It belongs to the TRAFAC class TrmE-Era-EngA-EngB-Septin-like GTPase superfamily. TrmE GTPase family. As to quaternary structure, homodimer. Heterotetramer of two MnmE and two MnmG subunits. The cofactor is K(+).

It localises to the cytoplasm. Exhibits a very high intrinsic GTPase hydrolysis rate. Involved in the addition of a carboxymethylaminomethyl (cmnm) group at the wobble position (U34) of certain tRNAs, forming tRNA-cmnm(5)s(2)U34. The polypeptide is tRNA modification GTPase MnmE (Parabacteroides distasonis (strain ATCC 8503 / DSM 20701 / CIP 104284 / JCM 5825 / NCTC 11152)).